A 489-amino-acid chain; its full sequence is Equilibrative nucleobase transporter 1 (489 aa).

A helical transmembrane segment spans residues 17-37 (LLECLGFAGVLFGWTSLVFVF). N-linked (GlcNAc...) asparagine glycosylation is present at N56. 4 helical membrane-spanning segments follow: residues 72–92 (LIFTLASFTINFMTFPTGYIF), 102–122 (LIAIFLYTSATLTIAFTSADS), 123–143 (AVLLFLAMPMLAVGGILFLIT), and 158–180 (IITMYNGAFDSSSAVFLIIKLLY). Position 253 is a phosphoserine (S253). T258 is subject to Phosphothreonine. 6 helical membrane passes run 277–297 (FAWHVVWLSVIQLWHYLFIGT), 318–338 (NAFAVTQFFGVLCAPWNGLLM), 358–380 (AAALRSVVPSLTLTSLLSLGFAV), 402–422 (SFLYGCNAAFLTLAFPSEHFG), 426–446 (GLVMALSAVVSLLQFPLFTLI), and 455–475 (LYVNLMLVLLTLLTFIHPFLV).

The protein belongs to the SLC43A transporter (TC 2.A.1.44) family.

It is found in the basolateral cell membrane. It carries out the reaction adenine(out) = adenine(in). The enzyme catalyses guanine(out) = guanine(in). It catalyses the reaction hypoxanthine(out) = hypoxanthine(in). Sodium-independent purine-selective nucleobase transporter which mediates the equilibrative transport of extracellular purine nucleobases such as adenine, guanine and hypoxanthine. May regulate fatty acid (FA) transport in adipocytes, acting as a positive regulator of FA efflux and as a negative regulator of FA uptake. The sequence is that of Equilibrative nucleobase transporter 1 (SLC43A3) from Bos taurus (Bovine).